The chain runs to 279 residues: Four and a half LIM domains protein 2 (279 aa).

The C4-type zinc-finger motif lies at 7 to 31 (CHHCNESLYGKKYILKEENPHCVAC). 3 LIM zinc-binding domains span residues 40 to 92 (CEEC…CTDC), 101 to 153 (CQEC…CVPC), and 162 to 212 (CVQC…CLTC). A Glycyl lysine isopeptide (Lys-Gly) (interchain with G-Cter in SUMO2) cross-link involves residue Lys78. Glycyl lysine isopeptide (Lys-Gly) (interchain with G-Cter in SUMO2) cross-links involve residues Lys167 and Lys220. The LIM zinc-binding 4 domain maps to 221–275 (CAGCTNPISGLGGTKYISFEERQWHNDCFNCKKCSLSLVGRGFLTERDDILCPDC). A Phosphoserine modification is found at Ser238.

As to quaternary structure, interacts with ZNF638 and TTN/titin. Interacts with E4F1. Interacts with GRB7. Interacts with SIRT1 and FOXO1. Interacts with CEFIP and calcineurin. Interacts with FOXK1. In terms of tissue distribution, expressed in heart only (at protein level).

The protein localises to the cytoplasm. Its subcellular location is the nucleus. It is found in the myofibril. It localises to the sarcomere. The protein resides in the z line. May function as a molecular transmitter linking various signaling pathways to transcriptional regulation. Negatively regulates the transcriptional repressor E4F1 and may function in cell growth. Inhibits the transcriptional activity of FOXO1 and its apoptotic function by enhancing the interaction of FOXO1 with SIRT1 and FOXO1 deacetylation. Negatively regulates the calcineurin/NFAT signaling pathway in cardiomyocytes. In Rattus norvegicus (Rat), this protein is Four and a half LIM domains protein 2 (Fhl2).